Consider the following 525-residue polypeptide: Ribosomal protein S6 kinase beta-1 (525 aa).

A disordered region spans residues 1–54 (MRRRRRRDGFYPAPDFRDREAEDMAGVFDIDLDQPEDAGSEDELEEGGQLNESM). The short motif at 28 to 32 (FDIDL) is the TOS motif element. The segment covering 30–46 (IDLDQPEDAGSEDELEE) has biased composition (acidic residues). The region spanning 91-352 (FELLRVLGKG…AGEVQAHPFF (262 aa)) is the Protein kinase domain. Residues 97 to 105 (LGKGGYGKV) and K123 contribute to the ATP site. Residue D218 is the Proton acceptor of the active site. T252 carries the post-translational modification Phosphothreonine; by PDPK1. The AGC-kinase C-terminal domain occupies 353–423 (RHINWEELLA…VAPSVLESVK (71 aa)). The disordered stretch occupies residues 380–399 (SQFDSKFTRQTPVDSPDDST). Positions 381–399 (QFDSKFTRQTPVDSPDDST) are enriched in polar residues. The residue at position 394 (S394) is a Phosphoserine. T412 is subject to Phosphothreonine; by MTOR, NEK6 and NEK7. The autoinhibitory domain stretch occupies residues 424–525 (EKFSFEPKIR…KRPEHLRMNL (102 aa)). Residues S434 and S441 each carry the phosphoserine modification. Phosphothreonine is present on T444. A phosphoserine mark is found at S447 and S452. Residues 486-509 (VTTSGEASAPLPIRQPNSGPYKKQ) form a disordered region. An N6-acetyllysine modification is found at K516.

This sequence belongs to the protein kinase superfamily. AGC Ser/Thr protein kinase family. S6 kinase subfamily. Interacts with PPP1R9A/neurabin-1. Interacts with RPTOR. Interacts with IRS1. Interacts with EIF3B and EIF3C. Interacts with TRAF4. Interacts with POLDIP3. Interacts (via N-terminus) with IER5. Phosphorylation at Thr-412 is regulated by mTORC1. The phosphorylation at this site is maintained by an agonist-dependent autophosphorylation mechanism. Activated by phosphorylation at Thr-252 by PDPK1. Dephosphorylation by PPP1CC at Thr-412 in mitochondrion.

The protein resides in the cytoplasm. It is found in the synapse. It localises to the synaptosome. The protein localises to the mitochondrion outer membrane. Its subcellular location is the mitochondrion. It catalyses the reaction L-seryl-[protein] + ATP = O-phospho-L-seryl-[protein] + ADP + H(+). It carries out the reaction L-threonyl-[protein] + ATP = O-phospho-L-threonyl-[protein] + ADP + H(+). With respect to regulation, activation requires multiple phosphorylation events on serine/threonine residues. Activation appears to be first mediated by phosphorylation of multiple sites in the autoinhibitory domain, which facilitates phosphorylation at Thr-412, disrupting the autoinhibitory mechanism and allowing phosphorylation of Thr-252 by PDPK1. The active conformation of the kinase is believed to be stabilized by a mechanism involving three conserved phosphorylation sites located in the kinase domain activation loop (Thr-252) and in the AGC-kinase C-terminal domain (Ser-394 in the middle of the tail/linker region and Thr-412 within a hydrophobic motif at its end). Activated by mTORC1; isoform Alpha I and isoform Alpha II are sensitive to rapamycin, which inhibits activating phosphorylation at Thr-412. Activated by PDPK1. Functionally, serine/threonine-protein kinase that acts downstream of mTOR signaling in response to growth factors and nutrients to promote cell proliferation, cell growth and cell cycle progression. Regulates protein synthesis through phosphorylation of EIF4B, RPS6 and EEF2K, and contributes to cell survival by repressing the pro-apoptotic function of BAD. Under conditions of nutrient depletion, the inactive form associates with the EIF3 translation initiation complex. Upon mitogenic stimulation, phosphorylation by the mechanistic target of rapamycin complex 1 (mTORC1) leads to dissociation from the EIF3 complex and activation. The active form then phosphorylates and activates several substrates in the pre-initiation complex, including the EIF2B complex and the cap-binding complex component EIF4B. Also controls translation initiation by phosphorylating a negative regulator of EIF4A, PDCD4, targeting it for ubiquitination and subsequent proteolysis. Promotes initiation of the pioneer round of protein synthesis by phosphorylating POLDIP3/SKAR. In response to IGF1, activates translation elongation by phosphorylating EEF2 kinase (EEF2K), which leads to its inhibition and thus activation of EEF2. Also plays a role in feedback regulation of mTORC2 by mTORC1 by phosphorylating MAPKAP1/SIN1, MTOR and RICTOR, resulting in the inhibition of mTORC2 and AKT1 signaling. Also involved in feedback regulation of mTORC1 and mTORC2 by phosphorylating DEPTOR. Mediates cell survival by phosphorylating the pro-apoptotic protein BAD and suppressing its pro-apoptotic function. Phosphorylates mitochondrial URI1 leading to dissociation of a URI1-PPP1CC complex. The free mitochondrial PPP1CC can then dephosphorylate RPS6KB1 at Thr-412, which is proposed to be a negative feedback mechanism for the RPS6KB1 anti-apoptotic function. Mediates TNF-alpha-induced insulin resistance by phosphorylating IRS1 at multiple serine residues, resulting in accelerated degradation of IRS1. In cells lacking functional TSC1-2 complex, constitutively phosphorylates and inhibits GSK3B. May be involved in cytoskeletal rearrangement through binding to neurabin. Phosphorylates and activates the pyrimidine biosynthesis enzyme CAD, downstream of MTOR. Following activation by mTORC1, phosphorylates EPRS and thereby plays a key role in fatty acid uptake by adipocytes and also most probably in interferon-gamma-induced translation inhibition. This Oryctolagus cuniculus (Rabbit) protein is Ribosomal protein S6 kinase beta-1 (RPS6KB1).